An 87-amino-acid polypeptide reads, in one-letter code: Tektin-2 (87 aa).

Residues 26 to 55 adopt a coiled-coil conformation; the sequence is VEEELLKEVEVIEATKKALQQRVSQAFQQL.

The protein belongs to the tektin family. In terms of assembly, microtubule inner protein component of sperm flagellar doublet microtubules. May interact with CCDC172. Post-translationally, tyrosine phosphorylated. In terms of processing, ubiquitinated, leading to its degradation. Deubiquitinated by USP16, promoting its stability. Detected in sperm flagella (at protein level).

The protein resides in the cytoplasm. The protein localises to the cytoskeleton. Its subcellular location is the cilium axoneme. It localises to the flagellum axoneme. It is found in the microtubule organizing center. In terms of biological role, microtubule inner protein (MIP) part of the dynein-decorated doublet microtubules (DMTs) in cilia and flagellar axoneme. Plays a key role in the assembly or attachment of the inner dynein arm to microtubules in sperm flagella and tracheal cilia. Forms filamentous polymers in the walls of ciliary and flagellar microtubules. The sequence is that of Tektin-2 from Mesocricetus auratus (Golden hamster).